The following is a 486-amino-acid chain: Arginine/agmatine antiporter (486 aa).

A run of 12 helical transmembrane segments spans residues 12–32 (LGAI…GIFS), 41–61 (AGAG…FFIA), 85–105 (GFGP…QIFG), 129–149 (NTIP…FIVL), 161–181 (IGTI…AFFF), 211–231 (STML…VMSA), 242–262 (ATIL…LLPF), 296–316 (IGLL…VAEI), 341–361 (VSLY…YFST), 367–387 (MLSI…AFLV), 418–438 (IWLI…LLAL), and 461–481 (EVTK…LFST).

This sequence belongs to the amino acid-polyamine-organocation (APC) superfamily. Basic amino acid/polyamine antiporter (APA) (TC 2.A.3.2) family.

The protein localises to the cell inner membrane. Its function is as follows. Catalyzes the exchange of L-arginine for agmatine. The arginine uptake by the bacterium in the macrophage may be a virulence factor against the host innate immune response. The chain is Arginine/agmatine antiporter (aaxC) from Chlamydia felis (strain Fe/C-56) (Chlamydophila felis).